Consider the following 238-residue polypeptide: Probable transglycosylase SceD 3 (238 aa).

Positions 1–27 (MKKTVVASTLAVGLGVTGFAAGNSADA) are cleaved as a signal peptide. The segment at 82-161 (YGQGSTNAPA…SEASEGSSVN (80 aa)) is disordered. Low complexity predominate over residues 89-156 (APAQETAEQP…NESSSSEASE (68 aa)).

It belongs to the transglycosylase family. SceD subfamily.

It localises to the secreted. In terms of biological role, is able to cleave peptidoglycan and affects clumping and separation of bacterial cells. The polypeptide is Probable transglycosylase SceD 3 (sceD3) (Staphylococcus saprophyticus subsp. saprophyticus (strain ATCC 15305 / DSM 20229 / NCIMB 8711 / NCTC 7292 / S-41)).